The chain runs to 473 residues: Argininosuccinate lyase (473 aa).

It belongs to the lyase 1 family. Argininosuccinate lyase subfamily.

It is found in the cytoplasm. The catalysed reaction is 2-(N(omega)-L-arginino)succinate = fumarate + L-arginine. Its pathway is amino-acid biosynthesis; L-arginine biosynthesis; L-arginine from L-ornithine and carbamoyl phosphate: step 3/3. The sequence is that of Argininosuccinate lyase from Streptomyces clavuligerus.